Reading from the N-terminus, the 378-residue chain is Alcohol dehydrogenase 1 (378 aa).

Cysteine 48 is a binding site for Zn(2+). 49-53 (HTDVL) is an NAD(+) binding site. Zn(2+) is bound by residues histidine 69, cysteine 99, cysteine 102, cysteine 105, cysteine 113, and cysteine 177. Residues 202-207 (GIGTVG), aspartate 226, lysine 231, 274-276 (TGV), 297-299 (IGA), and 321-323 (TAF) contribute to the NAD(+) site.

It belongs to the zinc-containing alcohol dehydrogenase family. Class-IV subfamily. In terms of assembly, homodimer. It depends on Zn(2+) as a cofactor. In terms of tissue distribution, present in non-glandular trichome cells.

It is found in the nucleus. It localises to the cytoplasm. The protein resides in the cytosol. The catalysed reaction is (+)-artemisinic alcohol + NAD(+) = (+)-artemisinic aldehyde + NADH + H(+). The protein operates within sesquiterpene biosynthesis. Involved in the biosynthesis of the antimalarial endoperoxide artemisinin. Catalyzes the conversion of artemisinic alcohol into artemisinic aldehyde. The protein is Alcohol dehydrogenase 1 of Artemisia annua (Sweet wormwood).